An 89-amino-acid chain; its full sequence is FXYD domain-containing ion transport regulator 4 (89 aa).

A signal peptide spans 1-20 (MERVTLALLLLAGLTALEAN). Residues 21–38 (DPFANKDDPFYYDWKNLQ) lie on the Extracellular side of the membrane. The helical transmembrane segment at 39 to 59 (LSGLICGGLLAIAGIAAVLSG) threads the bilayer. Residues 60 to 89 (KCKCKSSQKQHSPVPEKAIPLITPGSATTC) are Cytoplasmic-facing.

The protein belongs to the FXYD family. In terms of assembly, regulatory subunit of the sodium/potassium-transporting ATPase which is composed of a catalytic alpha subunit, a non-catalytic beta subunit and a regulatory subunit. The regulatory subunit, a member of the FXYD protein family, modulates the enzymatic activity in a tissue- and isoform-specific way by changing affinities of the Na+/K+-ATPase toward Na(+), K(+) or ATP.

The protein resides in the cell membrane. It localises to the basolateral cell membrane. Associates with and regulates the activity of the sodium/potassium-transporting ATPase (NKA) which catalyzes the hydrolysis of ATP coupled with the exchange of Na(+) and K(+) ions across the plasma membrane. Increases the apparent affinity of the transporter for Na(+) and increases NKA activity. In Homo sapiens (Human), this protein is FXYD domain-containing ion transport regulator 4 (FXYD4).